The primary structure comprises 141 residues: Transcriptional regulator MraZ (141 aa).

2 SpoVT-AbrB domains span residues 5 to 47 (EFEH…PAER) and 76 to 119 (AAEC…GAEH).

Belongs to the MraZ family. In terms of assembly, forms oligomers.

The protein localises to the cytoplasm. It is found in the nucleoid. The polypeptide is Transcriptional regulator MraZ (Lactiplantibacillus plantarum (strain ATCC BAA-793 / NCIMB 8826 / WCFS1) (Lactobacillus plantarum)).